A 473-amino-acid chain; its full sequence is 3-isopropylmalate dehydratase large subunit (473 aa).

The [4Fe-4S] cluster site is built by Cys-351, Cys-414, and Cys-417.

Belongs to the aconitase/IPM isomerase family. LeuC type 1 subfamily. Heterodimer of LeuC and LeuD. The cofactor is [4Fe-4S] cluster.

The catalysed reaction is (2R,3S)-3-isopropylmalate = (2S)-2-isopropylmalate. It participates in amino-acid biosynthesis; L-leucine biosynthesis; L-leucine from 3-methyl-2-oxobutanoate: step 2/4. In terms of biological role, catalyzes the isomerization between 2-isopropylmalate and 3-isopropylmalate, via the formation of 2-isopropylmaleate. In Acidovorax ebreus (strain TPSY) (Diaphorobacter sp. (strain TPSY)), this protein is 3-isopropylmalate dehydratase large subunit.